Consider the following 241-residue polypeptide: Leucyl/phenylalanyl-tRNA--protein transferase (241 aa).

The protein belongs to the L/F-transferase family.

Its subcellular location is the cytoplasm. The enzyme catalyses N-terminal L-lysyl-[protein] + L-leucyl-tRNA(Leu) = N-terminal L-leucyl-L-lysyl-[protein] + tRNA(Leu) + H(+). The catalysed reaction is N-terminal L-arginyl-[protein] + L-leucyl-tRNA(Leu) = N-terminal L-leucyl-L-arginyl-[protein] + tRNA(Leu) + H(+). It carries out the reaction L-phenylalanyl-tRNA(Phe) + an N-terminal L-alpha-aminoacyl-[protein] = an N-terminal L-phenylalanyl-L-alpha-aminoacyl-[protein] + tRNA(Phe). In terms of biological role, functions in the N-end rule pathway of protein degradation where it conjugates Leu, Phe and, less efficiently, Met from aminoacyl-tRNAs to the N-termini of proteins containing an N-terminal arginine or lysine. This Neisseria meningitidis serogroup A / serotype 4A (strain DSM 15465 / Z2491) protein is Leucyl/phenylalanyl-tRNA--protein transferase.